The chain runs to 460 residues: Transcription factor AP-2-beta (460 aa).

Residue Lys-21 forms a Glycyl lysine isopeptide (Lys-Gly) (interchain with G-Cter in SUMO) linkage. Positions 30-139 (HDGVPSHSSR…PQLSGLDPRR (110 aa)) are disordered. The segment covering 35-51 (SHSSRLSQLGSVSQGPY) has biased composition (polar residues). Positions 121–132 (LLPQPRAALPQL) are enriched in low complexity. The residue at position 258 (Ser-258) is a Phosphoserine; by PKA. Residues 435 to 460 (NTTTNRHTSGEGPGSKTGDKEEKHRK) are disordered. Positions 451-460 (TGDKEEKHRK) are enriched in basic and acidic residues.

It belongs to the AP-2 family. In terms of assembly, binds DNA as a dimer. Can form homodimers or heterodimers with other AP-2 family members. Interacts with CITED4. Interacts with UBE2I. Interacts with KCTD1; this interaction represses transcription activation. Interacts with CITED2 (via C-terminus); the interaction stimulates TFAP2B-transcriptional activity. In terms of processing, sumoylated on Lys-21; which inhibits transcriptional activity.

It is found in the nucleus. Functionally, sequence-specific DNA-binding protein that interacts with inducible viral and cellular enhancer elements to regulate transcription of selected genes. AP-2 factors bind to the consensus sequence 5'-GCCNNNGGC-3' and activate genes involved in a large spectrum of important biological functions including proper eye, face, body wall, limb and neural tube development. They also suppress a number of genes including MCAM/MUC18, C/EBP alpha and MYC. AP-2-beta appears to be required for normal face and limb development and for proper terminal differentiation and function of renal tubular epithelia. The chain is Transcription factor AP-2-beta (TFAP2B) from Canis lupus familiaris (Dog).